The chain runs to 920 residues: Chitin synthase C (920 aa).

2 disordered regions span residues 1–41 and 140–173; these read MSYN…NAYQ and IPML…SPAP. The span at 154 to 163 shows a compositional bias: acidic residues; sequence YSDEYQVEEQ. 5 helical membrane passes run 466 to 486, 564 to 584, 608 to 628, 640 to 660, and 675 to 695; these read SAFG…FVAL, RWLN…YQIW, LFAW…TTYL, VLGV…FVLA, and MVYF…FVTV. N715 carries N-linked (GlcNAc...) asparagine glycosylation. 4 helical membrane passes run 718-738, 749-769, 847-867, and 892-912; these read FFTI…ASII, FIQY…YAFC, AVVL…LSAA, and VVLW…LWYL.

Belongs to the chitin synthase family. Class I subfamily.

The protein localises to the cell membrane. The enzyme catalyses [(1-&gt;4)-N-acetyl-beta-D-glucosaminyl](n) + UDP-N-acetyl-alpha-D-glucosamine = [(1-&gt;4)-N-acetyl-beta-D-glucosaminyl](n+1) + UDP + H(+). Functionally, polymerizes chitin, a structural polymer of the cell wall and septum, by transferring the sugar moiety of UDP-GlcNAc to the non-reducing end of the growing chitin polymer. Involved in hyphal growth. This Aspergillus oryzae (strain ATCC 42149 / RIB 40) (Yellow koji mold) protein is Chitin synthase C.